The chain runs to 114 residues: TYRO protein tyrosine kinase-binding protein (114 aa).

The first 27 residues, 1–27, serve as a signal peptide directing secretion; the sequence is MGAPEPSWCFLFLPVLLTVGGLSPVQA. Topologically, residues 28-42 are extracellular; sequence QSDNYPGCECSSVSP. The helical transmembrane segment at 43–63 threads the bilayer; that stretch reads GVLAGIVLGDLVLTLLIALAV. Asp52 is a binding site for Ca(2+). The Cytoplasmic segment spans residues 64–114; that stretch reads YSLGRLVSRGRGTADGTRKQHMAETESPYQELQGQRPEVYSDLNTQRQYYR. The interval 72-114 is disordered; it reads RGRGTADGTRKQHMAETESPYQELQGQRPEVYSDLNTQRQYYR. Positions 81 to 109 constitute an ITAM domain; it reads RKQHMAETESPYQELQGQRPEVYSDLNTQ. Tyr92 and Tyr103 each carry phosphotyrosine. Polar residues predominate over residues 105 to 114; that stretch reads DLNTQRQYYR.

Belongs to the TYROBP family. As to quaternary structure, homodimer; disulfide-linked. Homotrimer; disulfide-linked. Homotetramer; disulfide-linked. Homotrimers and homotetramers form when low levels of partner receptors are available and is competitive with assembly with interacting receptors. They may represent alternative oligomerization states or may be intermediates in the receptor assembly process. Binding of a metal cation aids in homooligomerization through coordination of the metal ion by the subunits of the oligomer. Interacts with TREM1. Interacts with TREM2. Interacts with CLECSF5. Interacts with CD300LB and CD300C2. Interacts with CD300E. Interacts (via ITAM domain) with SYK (via SH2 domains); activates SYK mediating neutrophils and macrophages integrin-mediated activation. Interacts with KLRC2. Interacts with CD300H. Interacts with KLRD1. Interacts with SIGLEC1. Following ligand binding by associated receptors, tyrosine phosphorylated in the ITAM domain which leads to activation of additional tyrosine kinases and subsequent cell activation.

The protein localises to the cell membrane. In terms of biological role, adapter protein which non-covalently associates with activating receptors found on the surface of a variety of immune cells to mediate signaling and cell activation following ligand binding by the receptors. TYROBP is tyrosine-phosphorylated in the ITAM domain following ligand binding by the associated receptors which leads to activation of additional tyrosine kinases and subsequent cell activation. Also has an inhibitory role in some cells. Non-covalently associates with activating receptors of the CD300 family to mediate cell activation. Also mediates cell activation through association with activating receptors of the CD200R family. Required for neutrophil activation mediated by integrin. Required for the activation of myeloid cells mediated by the CLEC5A/MDL1 receptor. Associates with natural killer (NK) cell receptors such as the KLRD1/KLRC2 heterodimer to mediate NK cell activation. Associates with TREM1 to mediate activation of neutrophils and monocytes. Associates with TREM2 on monocyte-derived dendritic cells to mediate up-regulation of chemokine receptor CCR7 and dendritic cell maturation and survival. PAssociation with TREM2 mediates cytokine-induced formation of multinucleated giant cells which are formed by the fusion of macrophages. Stabilizes the TREM2 C-terminal fragment (TREM2-CTF) produced by TREM2 ectodomain shedding which suppresses the release of pro-inflammatory cytokines. In microglia, required with TREM2 for phagocytosis of apoptotic neurons. Required with ITGAM/CD11B in microglia to control production of microglial superoxide ions which promote the neuronal apoptosis that occurs during brain development. Promotes pro-inflammatory responses in microglia following nerve injury which accelerates degeneration of injured neurons. ositively regulates the expression of the IRAK3/IRAK-M kinase and IL10 production by liver dendritic cells and inhibits their T cell allosimulatory ability. Negatively regulates B cell proliferation. Required for CSF1-mediated osteoclast cytoskeletal organization. Positively regulates multinucleation during osteoclast development. The chain is TYRO protein tyrosine kinase-binding protein from Rattus norvegicus (Rat).